The primary structure comprises 360 residues: Phosphoserine aminotransferase (360 aa).

Residue Arg42 participates in L-glutamate binding. Pyridoxal 5'-phosphate is bound by residues 76–77, Trp102, Thr153, Asp172, and Gln195; that span reads AR. At Lys196 the chain carries N6-(pyridoxal phosphate)lysine. 237-238 is a binding site for pyridoxal 5'-phosphate; that stretch reads NT.

The protein belongs to the class-V pyridoxal-phosphate-dependent aminotransferase family. SerC subfamily. Homodimer. Requires pyridoxal 5'-phosphate as cofactor.

It localises to the cytoplasm. The catalysed reaction is O-phospho-L-serine + 2-oxoglutarate = 3-phosphooxypyruvate + L-glutamate. It carries out the reaction 4-(phosphooxy)-L-threonine + 2-oxoglutarate = (R)-3-hydroxy-2-oxo-4-phosphooxybutanoate + L-glutamate. It functions in the pathway amino-acid biosynthesis; L-serine biosynthesis; L-serine from 3-phospho-D-glycerate: step 2/3. It participates in cofactor biosynthesis; pyridoxine 5'-phosphate biosynthesis; pyridoxine 5'-phosphate from D-erythrose 4-phosphate: step 3/5. In terms of biological role, catalyzes the reversible conversion of 3-phosphohydroxypyruvate to phosphoserine and of 3-hydroxy-2-oxo-4-phosphonooxybutanoate to phosphohydroxythreonine. The protein is Phosphoserine aminotransferase of Photobacterium profundum (strain SS9).